A 682-amino-acid chain; its full sequence is Potassium-transporting ATPase ATP-binding subunit (682 aa).

Helical transmembrane passes span 44–64 (VMAV…SGHG), 66–86 (AGFG…GNFA), 233–253 (LTFL…GVTL), and 257–277 (LLIA…LPAI). Aspartate 310 functions as the 4-aspartylphosphate intermediate in the catalytic mechanism. ATP is bound by residues aspartate 347, glutamate 351, 377 to 384 (FTAQTRMS), and lysine 395. 2 residues coordinate Mg(2+): aspartate 518 and aspartate 522. Transmembrane regions (helical) follow at residues 588–608 (FAIL…LNVM), 616–636 (AVLA…PLAL), and 658–678 (GLGG…ALVA).

It belongs to the cation transport ATPase (P-type) (TC 3.A.3) family. Type IA subfamily. The system is composed of three essential subunits: KdpA, KdpB and KdpC.

The protein resides in the cell inner membrane. It carries out the reaction K(+)(out) + ATP + H2O = K(+)(in) + ADP + phosphate + H(+). Functionally, part of the high-affinity ATP-driven potassium transport (or Kdp) system, which catalyzes the hydrolysis of ATP coupled with the electrogenic transport of potassium into the cytoplasm. This subunit is responsible for energy coupling to the transport system and for the release of the potassium ions to the cytoplasm. This Xanthomonas campestris pv. campestris (strain ATCC 33913 / DSM 3586 / NCPPB 528 / LMG 568 / P 25) protein is Potassium-transporting ATPase ATP-binding subunit.